Consider the following 190-residue polypeptide: Small ribosomal subunit protein uS7 (190 aa).

Thr2 is modified (N-acetylthreonine).

It belongs to the universal ribosomal protein uS7 family. As to quaternary structure, component of the small ribosomal subunit. Part of the small subunit (SSU) processome, composed of more than 70 proteins and the RNA chaperone small nucleolar RNA (snoRNA) U3.

It localises to the cytoplasm. It is found in the nucleus. Its subcellular location is the nucleolus. In terms of biological role, component of the small ribosomal subunit. The ribosome is a large ribonucleoprotein complex responsible for the synthesis of proteins in the cell. Part of the small subunit (SSU) processome, first precursor of the small eukaryotic ribosomal subunit. During the assembly of the SSU processome in the nucleolus, many ribosome biogenesis factors, an RNA chaperone and ribosomal proteins associate with the nascent pre-rRNA and work in concert to generate RNA folding, modifications, rearrangements and cleavage as well as targeted degradation of pre-ribosomal RNA by the RNA exosome. This Dictyostelium discoideum (Social amoeba) protein is Small ribosomal subunit protein uS7 (rps5).